The following is a 324-amino-acid chain: Glyoxylate/hydroxypyruvate reductase B (324 aa).

Active-site residues include Arg-237 and Glu-266. Catalysis depends on His-285, which acts as the Proton donor.

The protein belongs to the D-isomer specific 2-hydroxyacid dehydrogenase family. GhrB subfamily. As to quaternary structure, homodimer.

The protein localises to the cytoplasm. It catalyses the reaction glycolate + NADP(+) = glyoxylate + NADPH + H(+). The enzyme catalyses (R)-glycerate + NAD(+) = 3-hydroxypyruvate + NADH + H(+). The catalysed reaction is (R)-glycerate + NADP(+) = 3-hydroxypyruvate + NADPH + H(+). Its function is as follows. Catalyzes the NADPH-dependent reduction of glyoxylate and hydroxypyruvate into glycolate and glycerate, respectively. The protein is Glyoxylate/hydroxypyruvate reductase B of Salmonella paratyphi A (strain ATCC 9150 / SARB42).